Reading from the N-terminus, the 429-residue chain is Adenylosuccinate synthetase (429 aa).

Residues 12 to 18 (GDEGKGK) and 40 to 42 (GHT) contribute to the GTP site. The active-site Proton acceptor is Asp13. Residues Asp13 and Gly40 each contribute to the Mg(2+) site. IMP is bound by residues 13–16 (DEGK), 38–41 (NAGH), Thr128, Arg142, Gln223, Thr238, and Arg302. Residue His41 is the Proton donor of the active site. Substrate is bound at residue 298-304 (TTTGRAR). GTP is bound by residues Arg304, 330–332 (SID), and 412–414 (SVG).

This sequence belongs to the adenylosuccinate synthetase family. Homodimer. Requires Mg(2+) as cofactor.

It localises to the cytoplasm. It catalyses the reaction IMP + L-aspartate + GTP = N(6)-(1,2-dicarboxyethyl)-AMP + GDP + phosphate + 2 H(+). It participates in purine metabolism; AMP biosynthesis via de novo pathway; AMP from IMP: step 1/2. Its function is as follows. Plays an important role in the de novo pathway of purine nucleotide biosynthesis. Catalyzes the first committed step in the biosynthesis of AMP from IMP. The chain is Adenylosuccinate synthetase from Oceanobacillus iheyensis (strain DSM 14371 / CIP 107618 / JCM 11309 / KCTC 3954 / HTE831).